Reading from the N-terminus, the 1009-residue chain is DENN domain-containing protein 2A (1009 aa).

Disordered stretches follow at residues 15 to 153 (AEAS…LRFQ), 171 to 334 (KDGS…HRKS), 434 to 479 (KLLD…KKRK), and 498 to 532 (KRVK…LKAH). Basic and acidic residues-rich tracts occupy residues 45–59 (NIKD…KKEV), 130–147 (QPER…EPRL), 218–247 (HPSD…DRSL), and 275–284 (HAGEGDKDGK). Residues 297–314 (PPLPSLPPPPLPSSPPPS) show a composition bias toward pro residues. Over residues 434-443 (KLLDTRKLSR) the composition is skewed to basic and acidic residues. A compositionally biased stretch (polar residues) spans 503-513 (LSQSMESNSGK). Ser-551 is subject to Phosphoserine. The uDENN domain occupies 566 to 715 (EYFVVVSLHK…PFPALGKTIL (150 aa)). Residues 737-870 (RLEHVDFESL…LQVALEHILE (134 aa)) enclose the cDENN domain. Positions 872-969 (RNELACEQDE…QERELRRQDA (98 aa)) constitute a dDENN domain.

Its subcellular location is the cytoplasm. The protein localises to the cytoskeleton. Its function is as follows. Guanine nucleotide exchange factor (GEF) which may activate RAB9A and RAB9B. Promotes the exchange of GDP to GTP, converting inactive GDP-bound Rab proteins into their active GTP-bound form. May play a role in late endosomes back to trans-Golgi network/TGN transport. The protein is DENN domain-containing protein 2A (DENND2A) of Homo sapiens (Human).